Reading from the N-terminus, the 142-residue chain is Hemoglobin subunit alpha-2 (142 aa).

In terms of domain architecture, Globin spans 2–142 (LLTADDKKHI…VSSVLTSKYR (141 aa)). Residue His59 participates in O2 binding. Residue His88 coordinates heme b.

This sequence belongs to the globin family. In terms of assembly, heterotetramer of two alpha chains and two beta chains. As to expression, red blood cells.

Involved in oxygen transport from the lung to the various peripheral tissues. This is Hemoglobin subunit alpha-2 (hba2) from Xenopus borealis (Kenyan clawed frog).